The following is a 252-amino-acid chain: MAFASDESASPWSSTRLAALNAQFEPHGPKAILNWATHTFGDDLAQGTGFGPSGIVIMHMLADLRPGTTVFYLDTDLLFPETYELCDDLDERLDVDVTRVHGGLSLDEQAEQEGEELWNRNPNRCCFLRKVKPLRNFLDDRRAWITGVRRDQSERRADTDILSWEGQYGVFKINPLANWTQKEVWKYLFEHDLPYNPKHDQGYPSLGCVPCTEPVDQADGYSREGRWSDRDKTECGLHTSPEDEDGAHAAES.

[4Fe-4S] cluster contacts are provided by C125, C126, C208, and C211. The disordered stretch occupies residues 219–252 (DGYSREGRWSDRDKTECGLHTSPEDEDGAHAAES). The span at 221 to 235 (YSREGRWSDRDKTEC) shows a compositional bias: basic and acidic residues. C235 serves as the catalytic Nucleophile; cysteine thiosulfonate intermediate.

The protein belongs to the PAPS reductase family. CysH subfamily. The cofactor is [4Fe-4S] cluster.

It is found in the cytoplasm. The enzyme catalyses [thioredoxin]-disulfide + sulfite + AMP + 2 H(+) = adenosine 5'-phosphosulfate + [thioredoxin]-dithiol. Its pathway is sulfur metabolism; hydrogen sulfide biosynthesis; sulfite from sulfate. Functionally, catalyzes the formation of sulfite from adenosine 5'-phosphosulfate (APS) using thioredoxin as an electron donor. This chain is Adenosine 5'-phosphosulfate reductase, found in Salinibacter ruber (strain DSM 13855 / M31).